Here is a 321-residue protein sequence, read N- to C-terminus: MKFAVVGTGVIGSGWITRMLAHGHEVIATDPSEGAYERMLTQVKQNWPYAEQMGLAENASIQNLTFTPHLEEAVKDADHIQENVPEVEEIKDAVLKEIDFYAKPEATIGSSTSGIMPSELQANLSHPERLVVAHPFHPVYILPLVEIVPGKQTSEETTVKAEQIYESIGMDVLHVRHEIEGHIADRLMEALWRESLHIVNDGIATTEEVDKAFTHAAGLRYAQYGPFMTFHLAGGEGGMRHMLKQFGPALKKPWTKLIAPELTDDLYHKVVSGSEASSQGYTMSELDQKRNEFLIKVKELAEQYWPSDSKAMKKSNGAELQ.

Position 7-12 (Gly-7–Gly-12) interacts with NAD(+).

Belongs to the 3-hydroxyacyl-CoA dehydrogenase family. L-carnitine dehydrogenase subfamily. Homodimer.

It localises to the cytoplasm. It carries out the reaction carnitine + NAD(+) = 3-dehydrocarnitine + NADH + H(+). It participates in amine and polyamine metabolism; carnitine metabolism. Its function is as follows. Catalyzes the NAD(+)-dependent oxidation of L-carnitine to 3-dehydrocarnitine. In Staphylococcus epidermidis (strain ATCC 12228 / FDA PCI 1200), this protein is L-carnitine dehydrogenase.